Reading from the N-terminus, the 82-residue chain is Protein MGF 110-5L (82 aa).

Residues 1 to 28 form the signal peptide; that stretch reads MLVIFLGILGLLANQVSSQLVGQLHPTE. N-linked (GlcNAc...) asparagine; by host glycosylation occurs at Asn62.

It belongs to the asfivirus MGF 110 family.

Plays a role in virus cell tropism, and may be required for efficient virus replication in macrophages. This chain is Protein MGF 110-5L, found in Ornithodoros (relapsing fever ticks).